The following is a 155-amino-acid chain: MSSVILDLQIACEHSQGLPKETLFQHWLDGVLPQFQSESEVTIRIVDEAESHDLNLTYRGKNKPTNVLSFPFEAPPEIDLPLLGDLIICRQVVEKEAEEQQKTIEEHWAHMVVHGCLHLLGYDHIEDDEAEEMESLETEIMQKLGYADPYLAEKE.

Residues His-114, His-118, and His-124 each contribute to the Zn(2+) site.

The protein belongs to the endoribonuclease YbeY family. Zn(2+) serves as cofactor.

The protein localises to the cytoplasm. Its function is as follows. Single strand-specific metallo-endoribonuclease involved in late-stage 70S ribosome quality control and in maturation of the 3' terminus of the 16S rRNA. The sequence is that of Endoribonuclease YbeY from Photorhabdus laumondii subsp. laumondii (strain DSM 15139 / CIP 105565 / TT01) (Photorhabdus luminescens subsp. laumondii).